The sequence spans 305 residues: UDP-N-acetylenolpyruvoylglucosamine reductase (305 aa).

In terms of domain architecture, FAD-binding PCMH-type spans 35-214 (VGGPAQALFT…RARMNEVQAH (180 aa)). The active site involves Arg179. The active-site Proton donor is the Ser228. Residue Glu298 is part of the active site.

This sequence belongs to the MurB family. The cofactor is FAD.

Its subcellular location is the cytoplasm. The enzyme catalyses UDP-N-acetyl-alpha-D-muramate + NADP(+) = UDP-N-acetyl-3-O-(1-carboxyvinyl)-alpha-D-glucosamine + NADPH + H(+). Its pathway is cell wall biogenesis; peptidoglycan biosynthesis. In terms of biological role, cell wall formation. This chain is UDP-N-acetylenolpyruvoylglucosamine reductase, found in Nitrobacter winogradskyi (strain ATCC 25391 / DSM 10237 / CIP 104748 / NCIMB 11846 / Nb-255).